The sequence spans 462 residues: Argininosuccinate lyase (462 aa).

Belongs to the lyase 1 family. Argininosuccinate lyase subfamily.

It is found in the cytoplasm. It carries out the reaction 2-(N(omega)-L-arginino)succinate = fumarate + L-arginine. Its pathway is amino-acid biosynthesis; L-arginine biosynthesis; L-arginine from L-ornithine and carbamoyl phosphate: step 3/3. The chain is Argininosuccinate lyase from Caldicellulosiruptor bescii (strain ATCC BAA-1888 / DSM 6725 / KCTC 15123 / Z-1320) (Anaerocellum thermophilum).